Consider the following 600-residue polypeptide: CDK5RAP1-like protein (600 aa).

Residues 45–66 are disordered; that stretch reads LSSAAHPPPPPPRRLARSGPSR. The region spanning 93–222 is the MTTase N-terminal domain; the sequence is GRIYHETYGC…LPRLLQEVDY (130 aa). Positions 102, 139, 185, 260, 264, and 267 each coordinate [4Fe-4S] cluster. The region spanning 246 to 501 is the Radical SAM core domain; the sequence is SDNSVTAFVS…ISTFRETTAK (256 aa). The TRAM domain occupies 504-580; that stretch reads DSQVGTVQLV…TASLSGDVIA (77 aa).

The protein belongs to the methylthiotransferase family. MiaB subfamily. [4Fe-4S] cluster is required as a cofactor.

Potential regulator of CDK5 activity. In Oryza sativa subsp. japonica (Rice), this protein is CDK5RAP1-like protein.